The primary structure comprises 543 residues: Limonene hydroxylase (543 aa).

Residues 232–464 (VVTYNPSFEK…LRNVIERAFL (233 aa)) enclose the Sigma-54 factor interaction domain. ATP contacts are provided by residues 260–267 (GETGSGKE) and 324–333 (ADGGTLFLDE).

It carries out the reaction (4S)-limonene + reduced [NADPH--hemoprotein reductase] + O2 = (1S,5R)-carveol + oxidized [NADPH--hemoprotein reductase] + H2O + H(+). The catalysed reaction is (4S)-limonene + reduced [NADPH--hemoprotein reductase] + O2 = (4S)-perillyl alcohol + oxidized [NADPH--hemoprotein reductase] + H2O + H(+). It catalyses the reaction perillyl alcohol + NAD(+) = perillyl aldehyde + NADH + H(+). The enzyme catalyses (1S,5R)-carveol + NADP(+) = (R)-carvone + NADPH + H(+). Its function is as follows. Involved in limonene hydroxylation to a mixture of carveol and perillyl alcohol as well as in dehydrogenation of these products to carvone and perillyl aldehyde. Aromatic alcohols containing an isopropyl or isopropenyl group at ring position 4 also served as substrates for the dehydrogenase activity. The sequence is that of Limonene hydroxylase from Geobacillus stearothermophilus (Bacillus stearothermophilus).